Here is a 30-residue protein sequence, read N- to C-terminus: Matrix Gla protein (30 aa).

Phosphoserine is present on residues S2, S3, and S5.

This sequence belongs to the osteocalcin/matrix Gla protein family. Requires vitamin K-dependent gamma-carboxylation for its function.

It is found in the secreted. In terms of biological role, associates with the organic matrix of calcified cartilage. The sequence is that of Matrix Gla protein (mgp) from Prionace glauca (Blue shark).